The sequence spans 840 residues: Aconitase AMT8 (840 aa).

258-260 is a substrate binding site; it reads DSH. Positions 450, 513, and 516 each coordinate [4Fe-4S] cluster. Residues Arg-536, Arg-541, and 709–710 each bind substrate; that span reads SR.

This sequence belongs to the aconitase/IPM isomerase family.

The protein operates within mycotoxin biosynthesis. In terms of biological role, aconitase; part of the gene clusters that mediate the biosynthesis of AM-toxins, host-selective toxins (HSTs) causing Alternaria blotch on apple, a worldwide distributed disease. AM-toxins are cyclic depsipeptides containing the 3 residues 2-hydroxy-isovaleric acid (2-HIV), dehydroalanine, L-alanine which are common for all 3 AM-toxins I to III. The fourth precursor is L-alpha-amino-methoxyphenyl-valeric acid (L-Amv) for AM-toxin I, L-alpha-amino-phenyl-valeric acid (L-Apv) for AM-toxin II, and L-alpha-amino-hydroxyphenyl-valeric acid (L-Ahv) for AM-toxin III. AM-toxins have two target sites for affecting susceptible apple cells; they cause invagination of the plasma membrane and electrolyte loss and chloroplast disorganization. The non-ribosomal peptide synthetase AMT1 contains 4 catalytic modules and is responsible for activation of each residue in AM-toxin. The aldo-keto reductase AMT2 catalyzes the conversion of 2-keto-isovaleric acid (2-KIV) to 2-hydroxy-isovaleric acid (2-HIV), one of the precursor residues incorporated by AMT1 during AM-toxin biosynthesis, by reduction of its ketone to an alcohol. The cytochrome P450 monooxygenase AMT3 and the thioesterase AMT4 are also important for AM-toxin production, but their exact function within the AM-toxin biosynthesis are not known yet. Up to 21 proteins (including AMT1 to AMT4) are predicted to be involved in AM-toxin biosynthesis since their expression ishighly up-regulated in AM-toxin-producing cultures. This is Aconitase AMT8 from Alternaria alternata (Alternaria rot fungus).